Reading from the N-terminus, the 451-residue chain is F-box/kelch-repeat protein At1g74510 (451 aa).

The F-box domain occupies 93–139 (SSPVTRLDQNALLNCLAHCSLSDFGSIASTNRTFRSLIKDSELYRLR). 5 Kelch repeats span residues 137–188 (RLRR…KESL), 193–236 (ELLV…SLGE), 237–284 (IAVI…FMDG), 286–333 (FYCI…DQAK), and 349–395 (AVVK…GMAF).

This is F-box/kelch-repeat protein At1g74510 from Arabidopsis thaliana (Mouse-ear cress).